The following is a 373-amino-acid chain: Probable G-protein coupled receptor 173 (373 aa).

At 1–26 (MANTTGEPEEVSGALSPPSAVAYVKL) the chain is on the extracellular side. Residue Asn-3 is glycosylated (N-linked (GlcNAc...) asparagine). A helical transmembrane segment spans residues 27–47 (VLLGLIMCVSLAGNAILSLLV). Residues 48–59 (LKDRALHKAPYY) are Cytoplasmic-facing. A helical transmembrane segment spans residues 60 to 80 (FLLDLCLADGIRSAVCFPFVL). At 81–97 (ASVRHGSSWTFSALSCK) the chain is on the extracellular side. Cys-96 and Cys-174 form a disulfide bridge. Residues 98-118 (IVAFMAVLFCFHAAFMLFCIS) traverse the membrane as a helical segment. Residues 119 to 139 (VTRYMAIAHHRFYAKRMTLWT) are Cytoplasmic-facing. A helical membrane pass occupies residues 140–160 (CAAVICMAWTLSVAMAFPPVF). Residues 161 to 188 (DVGTYKFIREEDQCIFEHRYFKANDTLG) lie on the Extracellular side of the membrane. Asn-184 is a glycosylation site (N-linked (GlcNAc...) asparagine). The helical transmembrane segment at 189–209 (FMLMLAVLMAATHAVYGKLLL) threads the bilayer. The Cytoplasmic segment spans residues 210–287 (FEYRHRKMKP…VKGEKQLGRM (78 aa)). The helical transmembrane segment at 288-308 (FYAITLLFLLLWSPYIVACYW) threads the bilayer. Topologically, residues 309-322 (RVFVKACAVPHRYL) are extracellular. A helical membrane pass occupies residues 323-343 (ATAVWMSFAQAAVNPIVCFLL). Topologically, residues 344 to 373 (NKDLKKCLRTHAPCWGTGGAPAPREPYCVM) are cytoplasmic.

Belongs to the G-protein coupled receptor 1 family.

The protein resides in the cell membrane. Is a receptor for the SMIM20 derived peptides Phoenixin-14 and Phoenixin-20. It mediates the Phoenixin-14 and Phoenixin-20 augmentation of gonadotropin-releasing hormone (GNRH) signaling in the hypothalamus and pituitary gland. In the ovary, it mediates the effects of Phoenixin-14 and Phoenixin-20 induced granulosa cell proliferation during follicular growth. This chain is Probable G-protein coupled receptor 173 (GPR173), found in Bos taurus (Bovine).